The following is a 158-amino-acid chain: Endoribonuclease YbeY (158 aa).

The Zn(2+) site is built by His-118, His-122, and His-128.

The protein belongs to the endoribonuclease YbeY family. The cofactor is Zn(2+).

It is found in the cytoplasm. Functionally, single strand-specific metallo-endoribonuclease involved in late-stage 70S ribosome quality control and in maturation of the 3' terminus of the 16S rRNA. The protein is Endoribonuclease YbeY of Haemophilus ducreyi (strain 35000HP / ATCC 700724).